A 961-amino-acid polypeptide reads, in one-letter code: Probable inorganic carbon transporter subunit DabA (961 aa).

Zn(2+)-binding residues include cysteine 406, aspartate 408, histidine 653, and cysteine 668.

It belongs to the inorganic carbon transporter (TC 9.A.2) DabA family. As to quaternary structure, forms a complex with DabB. Zn(2+) is required as a cofactor.

Its subcellular location is the cell inner membrane. Part of an energy-coupled inorganic carbon pump. This Hydrogenobaculum sp. (strain Y04AAS1) protein is Probable inorganic carbon transporter subunit DabA.